The chain runs to 406 residues: Sorting nexin-6 (406 aa).

The residue at position 1 (M1) is an N-acetylmethionine. M2 is modified (N-acetylmethionine; in Sorting nexin-6, N-terminally processed). Residues M2 to N179 are interaction with PIM1. One can recognise a PX domain in the interval L26 to L173. Residues S41–K47, F100–K106, and E114–M117 contribute to the a 1,2-diacyl-sn-glycero-3-phospho-(1D-myo-inositol-4,5-bisphosphate) site. Residues S116 and S194 each carry the phosphoserine modification. The tract at residues E182–I199 is membrane-binding amphipathic helix. The BAR domain occupies V203–T406.

The protein belongs to the sorting nexin family. In terms of assembly, forms heterodimers with BAR domain-containing sorting nexins SNX1 and SNX2. The heterodimers are proposed to self-assemble into helical arrays on the membrane to stabilize and expand local membrane curvature underlying endosomal tubule formation. Thought to be a component of the originally described retromer complex (also called SNX-BAR retromer) which is a pentamer containing the heterotrimeric retromer cargo-selective complex (CSC), also described as vacuolar protein sorting subcomplex (VPS), and a heterodimeric membrane-deforming subcomplex formed between SNX1 or SNX2 and SNX5 or SNX6 (also called SNX-BAR subcomplex); the respective CSC and SNX-BAR subcomplexes associate with low affinity. Interacts with SNX1, SNX2, VPS26A, VPS29, VPS35, TGFB receptors, BACE1, BRMS1, PIP5K1C. Interacts with DCTN1; the association with DCTN1 is involved in movement of retromer-c ontaining vesicles toward the TGN. Interacts with PIM1; translocating SNX6 to the nucleus. Interacts with CDKN1B and GIT1. In terms of processing, in vitro phosphorylated by PIM1; not affecting PIM1-dependent nuclear translocation.

The protein resides in the early endosome membrane. It localises to the cytoplasmic vesicle. The protein localises to the cytoplasm. It is found in the nucleus. Functionally, involved in several stages of intracellular trafficking. Interacts with membranes phosphatidylinositol 3,4-bisphosphate and/or phosphatidylinositol 4,5-bisphosphate. Acts in part as component of the retromer membrane-deforming SNX-BAR subcomplex. The SNX-BAR retromer mediates retrograde transport of cargo proteins from endosomes to the trans-Golgi network (TGN) and is involved in endosome-to-plasma membrane transport for cargo protein recycling. The SNX-BAR subcomplex functions to deform the donor membrane into a tubular profile called endosome-to-TGN transport carrier (ETC). Does not have in vitro vesicle-to-membrane remodeling activity. Involved in retrograde endosome-to-TGN transport of lysosomal enzyme receptor IGF2R. May function as link between transport vesicles and dynactin. Negatively regulates retrograde transport of BACE1 from the cell surface to the trans-Golgi network. Involved in E-cadherin sorting and degradation; inhibits PIP5K1C-mediated E-cadherin degradation. In association with GIT1 involved in EGFR degradation. Promotes lysosomal degradation of CDKN1B. May contribute to transcription regulation. The protein is Sorting nexin-6 (Snx6) of Mus musculus (Mouse).